A 442-amino-acid chain; its full sequence is tRNA-2-methylthio-N(6)-dimethylallyladenosine synthase (442 aa).

Positions 5 to 122 (KRIFIKTFGC…LPDMIESKRR (118 aa)) constitute an MTTase N-terminal domain. Cysteine 14, cysteine 51, cysteine 85, cysteine 159, cysteine 163, and cysteine 166 together coordinate [4Fe-4S] cluster. The Radical SAM core domain occupies 145–377 (RVEGAAAFLS…QALNEAQGKA (233 aa)). Positions 380–442 (ASMVGSIQRV…LSHTLRGELV (63 aa)) constitute a TRAM domain.

Belongs to the methylthiotransferase family. MiaB subfamily. Monomer. [4Fe-4S] cluster is required as a cofactor.

It localises to the cytoplasm. The enzyme catalyses N(6)-dimethylallyladenosine(37) in tRNA + (sulfur carrier)-SH + AH2 + 2 S-adenosyl-L-methionine = 2-methylsulfanyl-N(6)-dimethylallyladenosine(37) in tRNA + (sulfur carrier)-H + 5'-deoxyadenosine + L-methionine + A + S-adenosyl-L-homocysteine + 2 H(+). Functionally, catalyzes the methylthiolation of N6-(dimethylallyl)adenosine (i(6)A), leading to the formation of 2-methylthio-N6-(dimethylallyl)adenosine (ms(2)i(6)A) at position 37 in tRNAs that read codons beginning with uridine. The sequence is that of tRNA-2-methylthio-N(6)-dimethylallyladenosine synthase from Methylobacillus flagellatus (strain ATCC 51484 / DSM 6875 / VKM B-1610 / KT).